Consider the following 194-residue polypeptide: 3-isopropylmalate dehydratase small subunit (194 aa).

Belongs to the LeuD family. LeuD type 1 subfamily. Heterodimer of LeuC and LeuD.

The enzyme catalyses (2R,3S)-3-isopropylmalate = (2S)-2-isopropylmalate. It participates in amino-acid biosynthesis; L-leucine biosynthesis; L-leucine from 3-methyl-2-oxobutanoate: step 2/4. Catalyzes the isomerization between 2-isopropylmalate and 3-isopropylmalate, via the formation of 2-isopropylmaleate. In Brevibacillus brevis (strain 47 / JCM 6285 / NBRC 100599), this protein is 3-isopropylmalate dehydratase small subunit.